Consider the following 201-residue polypeptide: Pyridoxine/pyridoxamine 5'-phosphate oxidase (201 aa).

Residues 49-54 (RMVLLK), 64-65 (YT), Lys-71, and Gln-93 contribute to the FMN site. Residue Lys-54 participates in substrate binding. Residues Tyr-111, Arg-115, and Ser-119 each contribute to the substrate site. FMN-binding positions include 128 to 129 (QS) and Trp-172. Residue 178-180 (RLH) coordinates substrate. An FMN-binding site is contributed by Arg-182.

The protein belongs to the pyridoxamine 5'-phosphate oxidase family. As to quaternary structure, homodimer. FMN serves as cofactor.

The enzyme catalyses pyridoxamine 5'-phosphate + O2 + H2O = pyridoxal 5'-phosphate + H2O2 + NH4(+). It carries out the reaction pyridoxine 5'-phosphate + O2 = pyridoxal 5'-phosphate + H2O2. It participates in cofactor metabolism; pyridoxal 5'-phosphate salvage; pyridoxal 5'-phosphate from pyridoxamine 5'-phosphate: step 1/1. It functions in the pathway cofactor metabolism; pyridoxal 5'-phosphate salvage; pyridoxal 5'-phosphate from pyridoxine 5'-phosphate: step 1/1. In terms of biological role, catalyzes the oxidation of either pyridoxine 5'-phosphate (PNP) or pyridoxamine 5'-phosphate (PMP) into pyridoxal 5'-phosphate (PLP). This is Pyridoxine/pyridoxamine 5'-phosphate oxidase from Ruegeria sp. (strain TM1040) (Silicibacter sp.).